We begin with the raw amino-acid sequence, 435 residues long: Serine--tRNA ligase (435 aa).

An L-serine-binding site is contributed by 237 to 239; the sequence is TAE. Residue 268-270 participates in ATP binding; it reads RSE. E291 is a binding site for L-serine. ATP is bound at residue 355-358; it reads EISS. Residue S390 coordinates L-serine.

It belongs to the class-II aminoacyl-tRNA synthetase family. Type-1 seryl-tRNA synthetase subfamily. In terms of assembly, homodimer. The tRNA molecule binds across the dimer.

The protein resides in the cytoplasm. It catalyses the reaction tRNA(Ser) + L-serine + ATP = L-seryl-tRNA(Ser) + AMP + diphosphate + H(+). The catalysed reaction is tRNA(Sec) + L-serine + ATP = L-seryl-tRNA(Sec) + AMP + diphosphate + H(+). The protein operates within aminoacyl-tRNA biosynthesis; selenocysteinyl-tRNA(Sec) biosynthesis; L-seryl-tRNA(Sec) from L-serine and tRNA(Sec): step 1/1. Its function is as follows. Catalyzes the attachment of serine to tRNA(Ser). Is also able to aminoacylate tRNA(Sec) with serine, to form the misacylated tRNA L-seryl-tRNA(Sec), which will be further converted into selenocysteinyl-tRNA(Sec). This chain is Serine--tRNA ligase, found in Lactobacillus acidophilus (strain ATCC 700396 / NCK56 / N2 / NCFM).